The sequence spans 163 residues: Nucleotide-binding protein Clos_1967 (163 aa).

The protein belongs to the YajQ family.

Functionally, nucleotide-binding protein. This chain is Nucleotide-binding protein Clos_1967, found in Alkaliphilus oremlandii (strain OhILAs) (Clostridium oremlandii (strain OhILAs)).